We begin with the raw amino-acid sequence, 234 residues long: Purine nucleoside phosphorylase DeoD-type (234 aa).

His4 is an a purine D-ribonucleoside binding site. Phosphate-binding positions include Gly20, Arg24, Arg43, and 87–90 (RVGT). A purine D-ribonucleoside is bound by residues Glu162, 178–180 (EME), and 202–203 (SD). Asp203 functions as the Proton donor in the catalytic mechanism.

Belongs to the PNP/UDP phosphorylase family. As to quaternary structure, homohexamer; trimer of homodimers.

The enzyme catalyses a purine D-ribonucleoside + phosphate = a purine nucleobase + alpha-D-ribose 1-phosphate. It carries out the reaction a purine 2'-deoxy-D-ribonucleoside + phosphate = a purine nucleobase + 2-deoxy-alpha-D-ribose 1-phosphate. In terms of biological role, catalyzes the reversible phosphorolytic breakdown of the N-glycosidic bond in the beta-(deoxy)ribonucleoside molecules, with the formation of the corresponding free purine bases and pentose-1-phosphate. The chain is Purine nucleoside phosphorylase DeoD-type from Anoxybacillus flavithermus (strain DSM 21510 / WK1).